Here is a 284-residue protein sequence, read N- to C-terminus: Tropomyosin (284 aa).

Residues 1 to 284 (MDAIKKKMQA…DQTFAEIAGY (284 aa)) adopt a coiled-coil conformation. The segment at 103 to 133 (EEKLATTTEKLEEASKAADESERNRKVLEGR) is disordered.

It belongs to the tropomyosin family. As to quaternary structure, homodimer.

Tropomyosin, in association with the troponin complex, plays a central role in the calcium dependent regulation of muscle contraction. The polypeptide is Tropomyosin (Chlamys nipponensis akazara (Akazara scallop)).